The sequence spans 748 residues: LPS-assembly protein LptD (748 aa).

The N-terminal stretch at 1-19 (MSKTWGILMLSVLSAPSLA) is a signal peptide.

This sequence belongs to the LptD family. Component of the lipopolysaccharide transport and assembly complex. Interacts with LptE and LptA.

The protein resides in the cell outer membrane. Together with LptE, is involved in the assembly of lipopolysaccharide (LPS) at the surface of the outer membrane. The sequence is that of LPS-assembly protein LptD from Pseudoalteromonas translucida (strain TAC 125).